A 230-amino-acid chain; its full sequence is uncharacterized protein (230 aa).

The next 7 helical transmembrane spans lie at 34-54, 56-76, 87-107, 111-131, 146-166, 167-187, and 205-225; these read FFAG…MNFQ, VVQY…GLMF, MLFA…GMVI, GLGA…LMSV, MLFI…FLGS, PMFQ…YIAY, and VSLY…IGIF.

This sequence belongs to the BI1 family.

Its subcellular location is the cell membrane. This is an uncharacterized protein from Helicobacter pylori (strain ATCC 700392 / 26695) (Campylobacter pylori).